Here is a 269-residue protein sequence, read N- to C-terminus: CUE domain-containing protein 2-B (269 aa).

The segment at 110 to 130 (ASPSEKTATEPLEGAVAQDKD) is disordered. The 44-residue stretch at 131 to 174 (DPKTGVDLLLEIFPSCTITQAQTALSMAKGDLEDAVQIIVDGKV) folds into the CUE domain.

Belongs to the CUEDC2 family. In terms of processing, phosphorylated.

It localises to the cytoplasm. It is found in the nucleus. Its function is as follows. May play a role in targeting proteins for ubiquitination and subsequent proteasomal degradation. The sequence is that of CUE domain-containing protein 2-B (cuedc2-b) from Xenopus laevis (African clawed frog).